A 276-amino-acid polypeptide reads, in one-letter code: Thiazole synthase (276 aa).

K117 serves as the catalytic Schiff-base intermediate with DXP. 1-deoxy-D-xylulose 5-phosphate-binding positions include G178, 204-205 (AG), and 226-227 (NT).

Belongs to the ThiG family. As to quaternary structure, homotetramer. Forms heterodimers with either ThiH or ThiS.

The protein resides in the plastid. Its subcellular location is the chloroplast. It carries out the reaction [ThiS sulfur-carrier protein]-C-terminal-Gly-aminoethanethioate + 2-iminoacetate + 1-deoxy-D-xylulose 5-phosphate = [ThiS sulfur-carrier protein]-C-terminal Gly-Gly + 2-[(2R,5Z)-2-carboxy-4-methylthiazol-5(2H)-ylidene]ethyl phosphate + 2 H2O + H(+). It participates in cofactor biosynthesis; thiamine diphosphate biosynthesis. In terms of biological role, catalyzes the rearrangement of 1-deoxy-D-xylulose 5-phosphate (DXP) to produce the thiazole phosphate moiety of thiamine. Sulfur is provided by the thiocarboxylate moiety of the carrier protein ThiS. In vitro, sulfur can be provided by H(2)S. The polypeptide is Thiazole synthase (Gracilaria tenuistipitata var. liui (Red alga)).